The sequence spans 185 residues: Ribosome maturation factor RimM (185 aa).

One can recognise a PRC barrel domain in the interval 92 to 168; it reads DDDTFYHADL…GRRVVVAEAF (77 aa).

It belongs to the RimM family. As to quaternary structure, binds ribosomal protein uS19.

It localises to the cytoplasm. An accessory protein needed during the final step in the assembly of 30S ribosomal subunit, possibly for assembly of the head region. Essential for efficient processing of 16S rRNA. May be needed both before and after RbfA during the maturation of 16S rRNA. It has affinity for free ribosomal 30S subunits but not for 70S ribosomes. The protein is Ribosome maturation factor RimM of Xanthobacter autotrophicus (strain ATCC BAA-1158 / Py2).